The sequence spans 550 residues: Membrane-bound alkaline phosphatase (550 aa).

The first 39 residues, 1-39 (MSTWWLVVVAAAAAAGLVRAEDRYHPERLAAGEASAATR), serve as a signal peptide directing secretion. Asp-83 lines the Mg(2+) pocket. Asp-83 contacts Zn(2+). The Phosphoserine intermediate role is filled by Ser-133. The Mg(2+) site is built by His-196, Ser-198, and Glu-356. Positions 361, 365, 402, 403, and 479 each coordinate Zn(2+). Ser-524 is lipidated: GPI-anchor amidated serine. Residues 525 to 550 (AATVPTAALLSLLLAAFITLRHQCFL) constitute a propeptide, removed in mature form.

The protein belongs to the alkaline phosphatase family. Mg(2+) is required as a cofactor. It depends on Zn(2+) as a cofactor. In terms of tissue distribution, midgut.

It localises to the cell membrane. It catalyses the reaction a phosphate monoester + H2O = an alcohol + phosphate. This is Membrane-bound alkaline phosphatase (Alp-m) from Bombyx mori (Silk moth).